The following is a 156-amino-acid chain: Ribosome-binding factor A (156 aa).

The disordered stretch occupies residues 124-156 (TRAEYAGEAQPYRLEEEPEGSGDEVPPPGGDQR).

The protein belongs to the RbfA family. As to quaternary structure, monomer. Binds 30S ribosomal subunits, but not 50S ribosomal subunits or 70S ribosomes.

Its subcellular location is the cytoplasm. One of several proteins that assist in the late maturation steps of the functional core of the 30S ribosomal subunit. Associates with free 30S ribosomal subunits (but not with 30S subunits that are part of 70S ribosomes or polysomes). Required for efficient processing of 16S rRNA. May interact with the 5'-terminal helix region of 16S rRNA. The sequence is that of Ribosome-binding factor A from Salinispora tropica (strain ATCC BAA-916 / DSM 44818 / JCM 13857 / NBRC 105044 / CNB-440).